Here is a 513-residue protein sequence, read N- to C-terminus: ATP synthase subunit alpha (513 aa).

169-176 (GDRQIGKT) contacts ATP.

The protein belongs to the ATPase alpha/beta chains family. F-type ATPases have 2 components, CF(1) - the catalytic core - and CF(0) - the membrane proton channel. CF(1) has five subunits: alpha(3), beta(3), gamma(1), delta(1), epsilon(1). CF(0) has three main subunits: a(1), b(2) and c(9-12). The alpha and beta chains form an alternating ring which encloses part of the gamma chain. CF(1) is attached to CF(0) by a central stalk formed by the gamma and epsilon chains, while a peripheral stalk is formed by the delta and b chains.

Its subcellular location is the cell inner membrane. The catalysed reaction is ATP + H2O + 4 H(+)(in) = ADP + phosphate + 5 H(+)(out). Produces ATP from ADP in the presence of a proton gradient across the membrane. The alpha chain is a regulatory subunit. The polypeptide is ATP synthase subunit alpha (Francisella tularensis subsp. novicida (strain U112)).